The sequence spans 896 residues: Zinc finger protein 574 (896 aa).

C2H2-type zinc fingers lie at residues 16-38 (YVCS…QNSH), 76-98 (YQCL…QELH), and 126-148 (YECV…RQTH). S164 is modified (phosphoserine). Residues 214 to 236 (YKCSECSQLFQLPADFLEHQATH) form a C2H2-type 4 zinc finger. The span at 259-272 (VEVPVSQPEPVPSS) shows a compositional bias: low complexity. The interval 259 to 303 (VEVPVSQPEPVPSSDHSYELRNGEALGRDRRGRRARRNNSGEPGG) is disordered. Over residues 274–287 (HSYELRNGEALGRD) the composition is skewed to basic and acidic residues. S298 carries the post-translational modification Phosphoserine. 4 consecutive C2H2-type zinc fingers follow at residues 309 to 331 (LFCS…LRSH), 336 to 358 (FKCP…LGDH), 364 to 386 (FLCV…RRAH), and 392 to 413 (HSCP…RRTH). Residues 434-460 (FPEPAPAETGEPEAPEPPVAEESSAEP) are disordered. 6 C2H2-type zinc fingers span residues 466 to 489 (YRCL…RFVH), 495 to 517 (HKCS…LRTH), 523 to 545 (FPCP…RLTH), 551 to 573 (YRCG…RLVH), 579 to 601 (YRCQ…RYHH), and 607 to 630 (YKCR…LVAH). The segment at 636-659 (HRCSSCGAAFPSSLRLREHRCAAA) adopts a C2H2-type 15; degenerate zinc-finger fold. Residues 667-689 (FECGTCGKKVGSAARLQAHEAAH) form a C2H2-type 16 zinc finger. Residues 687 to 733 (AAHAAAGPGEVLAKEPPAPRAPRAARTPITSPTTLGSAAPAAPAAPA) form a disordered region. A compositionally biased stretch (low complexity) spans 707–732 (APRAARTPITSPTTLGSAAPAAPAAP). The residue at position 717 (S717) is a Phosphoserine. 4 consecutive C2H2-type zinc fingers follow at residues 738-760 (LECS…RRIH), 766-788 (YPCP…RRLH), 794-816 (FACE…RRIH), and 822-844 (YSCP…RKTH). R832 bears the Asymmetric dimethylarginine mark.

It belongs to the krueppel C2H2-type zinc-finger protein family.

It is found in the nucleus. Its function is as follows. May be involved in transcriptional regulation. The sequence is that of Zinc finger protein 574 (ZNF574) from Bos taurus (Bovine).